The chain runs to 420 residues: Gamma-glutamyl phosphate reductase (420 aa).

The protein belongs to the gamma-glutamyl phosphate reductase family.

Its subcellular location is the cytoplasm. It carries out the reaction L-glutamate 5-semialdehyde + phosphate + NADP(+) = L-glutamyl 5-phosphate + NADPH + H(+). It participates in amino-acid biosynthesis; L-proline biosynthesis; L-glutamate 5-semialdehyde from L-glutamate: step 2/2. In terms of biological role, catalyzes the NADPH-dependent reduction of L-glutamate 5-phosphate into L-glutamate 5-semialdehyde and phosphate. The product spontaneously undergoes cyclization to form 1-pyrroline-5-carboxylate. The chain is Gamma-glutamyl phosphate reductase from Pasteurella multocida (strain Pm70).